We begin with the raw amino-acid sequence, 291 residues long: Formamidopyrimidine-DNA glycosylase (291 aa).

Residue Pro2 is the Schiff-base intermediate with DNA of the active site. The Proton donor role is filled by Glu3. The active-site Proton donor; for beta-elimination activity is Lys58. His104, Arg127, and Arg172 together coordinate DNA. The FPG-type zinc-finger motif lies at 257–291 (FVYDRAGLPCRACGTPIRQIVQGQRSTFCCPTCQR). Arg281 functions as the Proton donor; for delta-elimination activity in the catalytic mechanism.

It belongs to the FPG family. Monomer. Zn(2+) is required as a cofactor.

The catalysed reaction is Hydrolysis of DNA containing ring-opened 7-methylguanine residues, releasing 2,6-diamino-4-hydroxy-5-(N-methyl)formamidopyrimidine.. It carries out the reaction 2'-deoxyribonucleotide-(2'-deoxyribose 5'-phosphate)-2'-deoxyribonucleotide-DNA = a 3'-end 2'-deoxyribonucleotide-(2,3-dehydro-2,3-deoxyribose 5'-phosphate)-DNA + a 5'-end 5'-phospho-2'-deoxyribonucleoside-DNA + H(+). In terms of biological role, involved in base excision repair of DNA damaged by oxidation or by mutagenic agents. Acts as a DNA glycosylase that recognizes and removes damaged bases. Has a preference for oxidized purines, such as 7,8-dihydro-8-oxoguanine (8-oxoG). Has AP (apurinic/apyrimidinic) lyase activity and introduces nicks in the DNA strand. Cleaves the DNA backbone by beta-delta elimination to generate a single-strand break at the site of the removed base with both 3'- and 5'-phosphates. In Ralstonia pickettii (strain 12J), this protein is Formamidopyrimidine-DNA glycosylase.